A 158-amino-acid polypeptide reads, in one-letter code: Protein Smg homolog (158 aa).

This sequence belongs to the Smg family.

In Pseudoalteromonas atlantica (strain T6c / ATCC BAA-1087), this protein is Protein Smg homolog.